A 325-amino-acid polypeptide reads, in one-letter code: Probable serine/threonine-protein phosphatase 2A activator 1 (325 aa).

Belongs to the PTPA-type PPIase family.

The protein localises to the cytoplasm. It catalyses the reaction [protein]-peptidylproline (omega=180) = [protein]-peptidylproline (omega=0). PPIases accelerate the folding of proteins. It catalyzes the cis-trans isomerization of proline imidic peptide bonds in oligopeptides. Acts as a regulatory subunit for PP2A-like phosphatases modulating their activity or substrate specificity, probably by inducing a conformational change in the catalytic subunit, a direct target of the PPIase. The protein is Probable serine/threonine-protein phosphatase 2A activator 1 (ppp2r4A) of Dictyostelium discoideum (Social amoeba).